Consider the following 493-residue polypeptide: Ectonucleoside triphosphate diphosphohydrolase 8 (493 aa).

At 1 to 7 (MEYKGKV) the chain is on the cytoplasmic side. Residues 8–28 (VAGLLTATCVFSIIALILSAV) form a helical membrane-spanning segment. At 29–463 (DVKDVFLPPG…ALEHVKGHEP (435 aa)) the chain is on the extracellular side. N-linked (GlcNAc...) asparagine glycosylation is found at Asn-65, Asn-79, and Asn-133. Residues Cys-76 and Cys-100 are joined by a disulfide bond. The active-site Proton acceptor is Glu-166. Asn-223, Asn-234, Asn-267, Asn-324, Asn-330, Asn-361, Asn-372, Asn-382, and Asn-445 each carry an N-linked (GlcNAc...) asparagine glycan. Cys-244 and Cys-291 are joined by a disulfide. Cys-327 and Cys-333 are oxidised to a cystine. A disulfide bridge links Cys-379 with Cys-401. Residues 464 to 486 (SLWAGAISFIVLAIVAGLVAILL) form a helical membrane-spanning segment. Residues 487–493 (QCFWKSK) lie on the Cytoplasmic side of the membrane.

The protein belongs to the GDA1/CD39 NTPase family. It depends on Ca(2+) as a cofactor. The cofactor is Mg(2+). N-glycosylated.

Its subcellular location is the cell membrane. The enzyme catalyses a ribonucleoside 5'-triphosphate + 2 H2O = a ribonucleoside 5'-phosphate + 2 phosphate + 2 H(+). In terms of biological role, canalicular ectonucleoside NTPDase responsible for the main hepatic NTPDase activity. Ectonucleoside ATPases catalyze the hydrolysis of gamma- and beta-phosphate residues of nucleotides, playing a central role in concentration of extracellular nucleotides. In Gallus gallus (Chicken), this protein is Ectonucleoside triphosphate diphosphohydrolase 8 (ENTPD8).